We begin with the raw amino-acid sequence, 206 residues long: Na(+)-translocating NADH-quinone reductase subunit E (206 aa).

The next 6 membrane-spanning stretches (helical) occupy residues 12–32 (AVFV…FLAV), 36–56 (ISSA…TVPV), 85–105 (FLGL…LEMF), 118–138 (GVFL…LFMV), 148–168 (VIYG…LAGI), and 184–204 (LGIT…FSGI).

The protein belongs to the NqrDE/RnfAE family. Composed of six subunits; NqrA, NqrB, NqrC, NqrD, NqrE and NqrF.

Its subcellular location is the cell inner membrane. It catalyses the reaction a ubiquinone + n Na(+)(in) + NADH + H(+) = a ubiquinol + n Na(+)(out) + NAD(+). In terms of biological role, NQR complex catalyzes the reduction of ubiquinone-1 to ubiquinol by two successive reactions, coupled with the transport of Na(+) ions from the cytoplasm to the periplasm. NqrA to NqrE are probably involved in the second step, the conversion of ubisemiquinone to ubiquinol. The chain is Na(+)-translocating NADH-quinone reductase subunit E from Chromohalobacter salexigens (strain ATCC BAA-138 / DSM 3043 / CIP 106854 / NCIMB 13768 / 1H11).